Reading from the N-terminus, the 386-residue chain is Cytoplasmic 60S subunit biogenesis factor ZNF622 (386 aa).

Ala-2 bears the N-acetylalanine mark. 2 consecutive U1-type zinc fingers follow at residues 4–28 (YTCITCRVAFRDAEMQRAHYKTDWH) and 67–91 (TYCTVCSKKFATFNAYENHLKSRRH). The disordered stretch occupies residues 135 to 237 (AIKAQPSTSP…AEDAEAEESP (103 aa)). Residues 165 to 176 (GTPERDPTEKPP) are compositionally biased toward basic and acidic residues. The span at 194 to 235 (EESEEEGEEDDEDWEDIDSDDGLECENPGVEEEDAEDAEAEE) shows a compositional bias: acidic residues. Ser-269 is modified (phosphoserine).

This sequence belongs to the REI1 family. Homo- and heterodimer. Associates with pre-60S ribosomal particles. Interacts with MELK and MYBL2. Interacts with DNAJC21. In terms of processing, phosphorylated by MELK. The phosphorylation may redirect the protein to the nucleus. Post-translationally, ubiquitinated by HECTD1, leading to its degradation.

Its subcellular location is the cytoplasm. The protein localises to the nucleus. Its function is as follows. Pre-60S-associated cytoplasmic factor involved in the cytoplasmic maturation of the 60S subunit. The chain is Cytoplasmic 60S subunit biogenesis factor ZNF622 (Znf622) from Rattus norvegicus (Rat).